We begin with the raw amino-acid sequence, 577 residues long: Arginine--tRNA ligase (577 aa).

Residues Pro122–His132 carry the 'HIGH' region motif.

This sequence belongs to the class-I aminoacyl-tRNA synthetase family. As to quaternary structure, monomer.

It localises to the cytoplasm. The enzyme catalyses tRNA(Arg) + L-arginine + ATP = L-arginyl-tRNA(Arg) + AMP + diphosphate. The chain is Arginine--tRNA ligase from Escherichia coli (strain K12 / MC4100 / BW2952).